Reading from the N-terminus, the 154-residue chain is UPF0225 protein Asuc_0343 (154 aa).

Belongs to the UPF0225 family.

This Actinobacillus succinogenes (strain ATCC 55618 / DSM 22257 / CCUG 43843 / 130Z) protein is UPF0225 protein Asuc_0343.